The primary structure comprises 194 residues: ATP-dependent Clp protease proteolytic subunit (194 aa).

The active-site Nucleophile is the Ser-98. His-123 is an active-site residue.

Belongs to the peptidase S14 family. Fourteen ClpP subunits assemble into 2 heptameric rings which stack back to back to give a disk-like structure with a central cavity, resembling the structure of eukaryotic proteasomes.

The protein resides in the cytoplasm. The catalysed reaction is Hydrolysis of proteins to small peptides in the presence of ATP and magnesium. alpha-casein is the usual test substrate. In the absence of ATP, only oligopeptides shorter than five residues are hydrolyzed (such as succinyl-Leu-Tyr-|-NHMec, and Leu-Tyr-Leu-|-Tyr-Trp, in which cleavage of the -Tyr-|-Leu- and -Tyr-|-Trp bonds also occurs).. In terms of biological role, cleaves peptides in various proteins in a process that requires ATP hydrolysis. Has a chymotrypsin-like activity. Plays a major role in the degradation of misfolded proteins. In Ruminiclostridium cellulolyticum (strain ATCC 35319 / DSM 5812 / JCM 6584 / H10) (Clostridium cellulolyticum), this protein is ATP-dependent Clp protease proteolytic subunit.